The primary structure comprises 776 residues: Meiotic expression up-regulated protein 1/2 (776 aa).

5 coiled-coil regions span residues 87–122, 173–227, 265–307, 362–430, and 496–595; these read YVLK…AQEE, FSEL…DLKE, YKVE…NDEE, KMSQ…RNNS, and INNQ…NTEL.

This chain is Meiotic expression up-regulated protein 1/2 (meu1), found in Schizosaccharomyces pombe (strain 972 / ATCC 24843) (Fission yeast).